A 272-amino-acid chain; its full sequence is uncharacterized protein (272 aa).

Residues 12-34 (FITGAARGLGRAHAVRLAADGAN), 39-40 (DI), 77-78 (DV), and N104 each bind NAD(+). S153 provides a ligand contact to substrate. Y170 acts as the Proton acceptor in catalysis. Residues K174 and 203 to 205 (VDT) contribute to the NAD(+) site.

It belongs to the short-chain dehydrogenases/reductases (SDR) family.

This is an uncharacterized protein from Mycobacterium tuberculosis (strain CDC 1551 / Oshkosh).